The chain runs to 175 residues: Nucleoside-triphosphatase THEP1 (175 aa).

ATP contacts are provided by residues 8–15 (GSPGVGKS) and 99–106 (LVVIDEIG).

This sequence belongs to the THEP1 NTPase family.

It catalyses the reaction a ribonucleoside 5'-triphosphate + H2O = a ribonucleoside 5'-diphosphate + phosphate + H(+). In terms of biological role, has nucleotide phosphatase activity towards ATP, GTP, CTP, TTP and UTP. May hydrolyze nucleoside diphosphates with lower efficiency. The protein is Nucleoside-triphosphatase THEP1 of Methanosarcina acetivorans (strain ATCC 35395 / DSM 2834 / JCM 12185 / C2A).